A 327-amino-acid polypeptide reads, in one-letter code: D-alanine--D-alanine ligase (327 aa).

The ATP-grasp domain occupies 113-312 (KRLWMTHDLS…YEDFVMQVVA (200 aa)). 139–194 (VADLGLPLIVKPAREGSSIGLSKVTDASQMREAFEKAAALDNDVIAETFIDGAELT) serves as a coordination point for ATP. Positions 266, 279, and 281 each coordinate Mg(2+).

It belongs to the D-alanine--D-alanine ligase family. It depends on Mg(2+) as a cofactor. Mn(2+) is required as a cofactor.

Its subcellular location is the cytoplasm. The enzyme catalyses 2 D-alanine + ATP = D-alanyl-D-alanine + ADP + phosphate + H(+). The protein operates within cell wall biogenesis; peptidoglycan biosynthesis. Cell wall formation. This chain is D-alanine--D-alanine ligase, found in Cupriavidus pinatubonensis (strain JMP 134 / LMG 1197) (Cupriavidus necator (strain JMP 134)).